We begin with the raw amino-acid sequence, 199 residues long: Golgi to ER traffic protein 1 (199 aa).

The Lumenal segment spans residues 1 to 11; that stretch reads MLLPDLHPYTI. Residues 12–31 traverse the membrane as a helical segment; it reads LLSIFIVLLLKQLVASIGKS. The Cytoplasmic segment spans residues 32-115; that stretch reads TIKEFVWLVY…SIDKVSNALL (84 aa). Residues 66-116 are a coiled coil; sequence EKRAISAQDEYAKWTKLNRQADKLSAELQKLNQEIQQQKASIDKVSNALLL. A helical transmembrane segment spans residues 116–136; the sequence is LVLTTLPIWVARVLYRNTHLF. The Lumenal segment spans residues 137-160; that stretch reads YIRQGIFPKYVEWVLALPFLPNGA. Residues 161 to 177 form a helical membrane-spanning segment; sequence VGLTIWMFAVNSVVSNF. Topologically, residues 178 to 199 are cytoplasmic; sequence AFLVSFPFAKKVSKPVRDTKIE.

It belongs to the WRB/GET1 family. In terms of assembly, component of the Golgi to ER traffic (GET) complex, which is composed of GET1, GET2 and GET3. Within the complex, GET1 and GET2 form a heterotetramer which is stabilized by phosphatidylinositol binding and which binds to the GET3 homodimer.

The protein resides in the endoplasmic reticulum membrane. It is found in the golgi apparatus membrane. Its function is as follows. Required for the post-translational delivery of tail-anchored (TA) proteins to the endoplasmic reticulum. Together with GET2, acts as a membrane receptor for soluble GET3, which recognizes and selectively binds the transmembrane domain of TA proteins in the cytosol. The GET complex cooperates with the HDEL receptor ERD2 to mediate the ATP-dependent retrieval of resident ER proteins that contain a C-terminal H-D-E-L retention signal from the Golgi to the ER. The polypeptide is Golgi to ER traffic protein 1 (Candida dubliniensis (strain CD36 / ATCC MYA-646 / CBS 7987 / NCPF 3949 / NRRL Y-17841) (Yeast)).